Here is a 625-residue protein sequence, read N- to C-terminus: Probable potassium transport system protein Kup (625 aa).

12 helical membrane-spanning segments follow: residues 13 to 33, 53 to 73, 103 to 123, 141 to 161, 172 to 192, 206 to 226, 250 to 270, 282 to 302, 340 to 360, 369 to 389, 400 to 420, and 422 to 442; these read TALA…LYAL, ILSI…VAIV, IYMI…GIIT, VFDP…FLVQ, FGPI…HSVI, AIQF…AVVL, WFFV…ALLL, LLVP…ATVI, IYVP…ILIF, AYGL…AVFI, VLLL…ATSL, and ILSG…ILMT.

Belongs to the HAK/KUP transporter (TC 2.A.72) family.

The protein localises to the cell inner membrane. The catalysed reaction is K(+)(in) + H(+)(in) = K(+)(out) + H(+)(out). In terms of biological role, transport of potassium into the cell. Likely operates as a K(+):H(+) symporter. This chain is Probable potassium transport system protein Kup, found in Acinetobacter baumannii (strain AYE).